Reading from the N-terminus, the 261-residue chain is Hydroxyethylthiazole kinase (261 aa).

Met-39 is a substrate binding site. Residues Arg-115 and Thr-159 each contribute to the ATP site. Gly-186 is a binding site for substrate.

Belongs to the Thz kinase family. It depends on Mg(2+) as a cofactor.

It carries out the reaction 5-(2-hydroxyethyl)-4-methylthiazole + ATP = 4-methyl-5-(2-phosphooxyethyl)-thiazole + ADP + H(+). The protein operates within cofactor biosynthesis; thiamine diphosphate biosynthesis; 4-methyl-5-(2-phosphoethyl)-thiazole from 5-(2-hydroxyethyl)-4-methylthiazole: step 1/1. Its function is as follows. Catalyzes the phosphorylation of the hydroxyl group of 4-methyl-5-beta-hydroxyethylthiazole (THZ). The chain is Hydroxyethylthiazole kinase from Macrococcus caseolyticus (strain JCSC5402) (Macrococcoides caseolyticum).